A 145-amino-acid polypeptide reads, in one-letter code: Putative type I specificity subunit S.MpnORF289P C-terminus (145 aa).

Belongs to the type-I restriction system S methylase family. In terms of assembly, the methyltransferase is composed of M and S polypeptides.

The C-terminal section of a specificity (S) subunit of a type I methyltransferase (MTase); this subunit dictates DNA sequence specificity. The single R subunit has multiple frameshifts and is probably not expressed. This Mycoplasma pneumoniae (strain ATCC 29342 / M129 / Subtype 1) (Mycoplasmoides pneumoniae) protein is Putative type I specificity subunit S.MpnORF289P C-terminus.